The sequence spans 289 residues: Thiazole synthase (289 aa).

Lys132 functions as the Schiff-base intermediate with DXP in the catalytic mechanism. 1-deoxy-D-xylulose 5-phosphate-binding positions include Gly193, 219-220 (AG), and 241-242 (NT).

Belongs to the ThiG family. Homotetramer. Forms heterodimers with either ThiH or ThiS.

The protein localises to the cytoplasm. It catalyses the reaction [ThiS sulfur-carrier protein]-C-terminal-Gly-aminoethanethioate + 2-iminoacetate + 1-deoxy-D-xylulose 5-phosphate = [ThiS sulfur-carrier protein]-C-terminal Gly-Gly + 2-[(2R,5Z)-2-carboxy-4-methylthiazol-5(2H)-ylidene]ethyl phosphate + 2 H2O + H(+). It participates in cofactor biosynthesis; thiamine diphosphate biosynthesis. In terms of biological role, catalyzes the rearrangement of 1-deoxy-D-xylulose 5-phosphate (DXP) to produce the thiazole phosphate moiety of thiamine. Sulfur is provided by the thiocarboxylate moiety of the carrier protein ThiS. In vitro, sulfur can be provided by H(2)S. This chain is Thiazole synthase, found in Rhodospirillum rubrum (strain ATCC 11170 / ATH 1.1.1 / DSM 467 / LMG 4362 / NCIMB 8255 / S1).